Here is a 401-residue protein sequence, read N- to C-terminus: Exodeoxyribonuclease 7 large subunit (401 aa).

This sequence belongs to the XseA family. In terms of assembly, heterooligomer composed of large and small subunits.

It is found in the cytoplasm. The enzyme catalyses Exonucleolytic cleavage in either 5'- to 3'- or 3'- to 5'-direction to yield nucleoside 5'-phosphates.. Its function is as follows. Bidirectionally degrades single-stranded DNA into large acid-insoluble oligonucleotides, which are then degraded further into small acid-soluble oligonucleotides. This Clostridioides difficile (strain 630) (Peptoclostridium difficile) protein is Exodeoxyribonuclease 7 large subunit.